The following is a 971-amino-acid chain: Dynamin-like GTPase OPA1, mitochondrial (971 aa).

A mitochondrion-targeting transit peptide spans 1 to 89; sequence MLRVGRAVAC…GGWRYQQHRS (89 aa). At 90–98 the chain is on the mitochondrial matrix side; the sequence is FWMLRLASR. Residues 99 to 115 traverse the membrane as a helical segment; that stretch reads LLKLRYIVLGSAVGGGY. At 116 to 781 the chain is on the mitochondrial intermembrane side; it reads TAKKTYEEWK…SVINDMVGPD (666 aa). Residues 204–224 are disordered; the sequence is EAPVTATPEASDKQFKKSSDK. The span at 213–224 shows a compositional bias: basic and acidic residues; that stretch reads ASDKQFKKSSDK. Residues 219 to 265 adopt a coiled-coil conformation; sequence KKSSDKEKVDQLQEELLRTQMKYQRMLERLEKENKDLRKVVLQKDEK. Positions 297-572 constitute a Dynamin-type G domain; the sequence is QDHLPRVVVV…FWKMVRESVE (276 aa). The G1 motif stretch occupies residues 307 to 314; the sequence is GDQSAGKT. Residues S310, G312, K313, T314, S315, and G329 each coordinate GTP. T314 lines the Mg(2+) pocket. The interval 333–336 is G2 motif; that stretch reads MMTR. 2 residues coordinate Mg(2+): T335 and D410. The segment at 410–413 is G3 motif; it reads DLPG. The G4 motif stretch occupies residues 478 to 481; it reads TKVD. The GTP site is built by K479, D481, and T514. The tract at residues 512 to 515 is G5 motif; it reads VVTG. 2 stalk region regions span residues 600–847 and 885–939; these read DRNE…IKDT and CNDV…VHLI. The segment at 747 to 867 is paddle region; sequence TDKPQWDAAI…QKALQHCNLC (121 aa). The stretch at 782–792 is an intramembrane region; it reads WKQRWMSWKNR. The Mitochondrial intermembrane portion of the chain corresponds to 793–971; that stretch reads SPEQHTRNET…AFIEALHKEK (179 aa). Residues C867 and C885 are joined by a disulfide bond. The stretch at 906–971 forms a coiled coil; the sequence is RQQLTNTEVR…AFIEALHKEK (66 aa).

This sequence belongs to the TRAFAC class dynamin-like GTPase superfamily. Dynamin/Fzo/YdjA family. Oligomeric complex consisting of membrane-bound and soluble forms of OPA1. Cleaved by OMA1 or YME1L downstream of the transmembrane region in response to different signals to generate soluble forms. Cleaved by OMA1 at position S1 following stress conditions, generating the short soluble form (Dynamin-like GTPase OPA1, short form; S-OPA1). Strongly expressed in the brain, ovary and skeletal muscle. In the brain, expression of the mRNA was observed specifically in motor neurons, in nucleus oculomotorius, in nucleus valvulae lateralis, in the medulla oblongata and in the spinal cord.

The protein resides in the mitochondrion inner membrane. Its subcellular location is the mitochondrion intermembrane space. The enzyme catalyses GTP + H2O = GDP + phosphate + H(+). Functionally, dynamin-related GTPase that is essential for normal mitochondrial morphology by mediating fusion of the mitochondrial inner membranes, regulating cristae morphology and maintaining respiratory chain function. Exists in two forms: the transmembrane, long form (Dynamin-like GTPase OPA1, long form; L-OPA1), which is tethered to the inner mitochondrial membrane, and the short soluble form (Dynamin-like GTPase OPA1, short form; S-OPA1), which results from proteolytic cleavage and localizes in the intermembrane space. Both forms (L-OPA1 and S-OPA1) cooperate to catalyze the fusion of the mitochondrial inner membrane. The equilibrium between L-OPA1 and S-OPA1 is essential: excess levels of S-OPA1, produced by cleavage by OMA1 following loss of mitochondrial membrane potential, lead to an impaired equilibrium between L-OPA1 and S-OPA1, inhibiting mitochondrial fusion. The balance between L-OPA1 and S-OPA1 also influences cristae shape and morphology. Its role in mitochondrial morphology is required for mitochondrial genome maintenance. Its function is as follows. Constitutes the transmembrane long form (L-OPA1) that plays a central role in mitochondrial inner membrane fusion and cristae morphology. L-OPA1 and the soluble short form (S-OPA1) form higher-order helical assemblies that coordinate the fusion of mitochondrial inner membranes. Inner membrane-anchored L-OPA1 molecules initiate membrane remodeling by recruiting soluble S-OPA1 to rapidly polymerize into a flexible cylindrical scaffold encaging the mitochondrial inner membrane. Once at the membrane surface, the formation of S-OPA1 helices induce bilayer curvature. OPA1 dimerization through the paddle region, which inserts into cardiolipin-containing membrane, promotes GTP hydrolysis and the helical assembly of a flexible OPA1 lattice on the membrane, which drives membrane curvature and mitochondrial fusion. Plays a role in the maintenance and remodeling of mitochondrial cristae, some invaginations of the mitochondrial inner membrane that provide an increase in the surface area. Probably acts by forming helical filaments at the inside of inner membrane tubes with the shape and dimensions of crista junctions. Constitutes the soluble short form (S-OPA1) generated by cleavage by OMA1, which plays a central role in mitochondrial inner membrane fusion and cristae morphology. The transmembrane long form (L-OPA1) and the S-OPA1 form higher-order helical assemblies that coordinate the fusion of mitochondrial inner membranes. Inner membrane-anchored L-OPA1 molecules initiate membrane remodeling by recruiting soluble S-OPA1 to rapidly polymerize into a flexible cylindrical scaffold encaging the mitochondrial inner membrane. Once at the membrane surface, the formation of S-OPA1 helices induce bilayer curvature. OPA1 dimerization through the paddle region, which inserts into cardiolipin-containing membrane, promotes GTP hydrolysis and the helical assembly of a flexible OPA1 lattice on the membrane, which drives membrane curvature and mitochondrial fusion. Excess levels of S-OPA1 produced by cleavage by OMA1 following stress conditions that induce loss of mitochondrial membrane potential, lead to an impaired equilibrium between L-OPA1 and S-OPA1, thereby inhibiting mitochondrial fusion. Plays a role in the maintenance and remodeling of mitochondrial cristae, some invaginations of the mitochondrial inner membrane that provide an increase in the surface area. Probably acts by forming helical filaments at the inside of inner membrane tubes with the shape and dimensions of crista junctions. The protein is Dynamin-like GTPase OPA1, mitochondrial (opa1) of Oncorhynchus masou (Cherry salmon).